Reading from the N-terminus, the 106-residue chain is Large ribosomal subunit protein eL42 (106 aa).

This sequence belongs to the eukaryotic ribosomal protein eL42 family. Component of the large ribosomal subunit.

The protein resides in the cytoplasm. Functionally, component of the large ribosomal subunit. The ribosome is a large ribonucleoprotein complex responsible for the synthesis of proteins in the cell. The protein is Large ribosomal subunit protein eL42 (RPL36A) of Papio anubis (Olive baboon).